Here is a 477-residue protein sequence, read N- to C-terminus: MKILKSFTPRILVIGDLMIDHYLWGNCERISPEAPVQIVDISKETTVLGGGGNVVNNLVALGAKVSVSGVIGNDENGVELLKLLREIDVNVDNIVIQEGRKTSKKSRVIAASQQILRYDKESKEEISKSSIEVILNSLAKDISRYDAVVLSDYSKGVLTKELCQGVISTCSKNGIKVLVDPKGSDYSKYSGAYLLTPNKKEAIQATKIDIKDKQSLKEALLKMKKDANLAISLITLSEDGVAIYDDEMKIFPTVAKEVFDVTGAGDTVIASIAFAISAGKSIEESAKFANLAAGVVVGKIGSATVSISEIEEYEASLHKSTSDAHIKGFEEIEAIVKRYKESGKKVVFTNGCFDILHVGHVKYLQIAKSFGDVLIVGLNSDTSVTRLKGPSRPVNIAEDRAYLLAALEAVDFVVPFEDDTPYELIKMIKPDTLVKGGDYEGKSVIGTEFAQELKLVDFVDGKSTTKTIQKIKGDLHV.

Positions 1–321 (MKILKSFTPR…EYEASLHKST (321 aa)) are ribokinase. 198–201 (NKKE) lines the ATP pocket. Asp266 is a catalytic residue. The segment at 348–477 (FTNGCFDILH…IQKIKGDLHV (130 aa)) is cytidylyltransferase.

It in the N-terminal section; belongs to the carbohydrate kinase PfkB family. This sequence in the C-terminal section; belongs to the cytidylyltransferase family. As to quaternary structure, homodimer.

It carries out the reaction D-glycero-beta-D-manno-heptose 7-phosphate + ATP = D-glycero-beta-D-manno-heptose 1,7-bisphosphate + ADP + H(+). The enzyme catalyses D-glycero-beta-D-manno-heptose 1-phosphate + ATP + H(+) = ADP-D-glycero-beta-D-manno-heptose + diphosphate. Its pathway is nucleotide-sugar biosynthesis; ADP-L-glycero-beta-D-manno-heptose biosynthesis; ADP-L-glycero-beta-D-manno-heptose from D-glycero-beta-D-manno-heptose 7-phosphate: step 1/4. It functions in the pathway nucleotide-sugar biosynthesis; ADP-L-glycero-beta-D-manno-heptose biosynthesis; ADP-L-glycero-beta-D-manno-heptose from D-glycero-beta-D-manno-heptose 7-phosphate: step 3/4. In terms of biological role, catalyzes the phosphorylation of D-glycero-D-manno-heptose 7-phosphate at the C-1 position to selectively form D-glycero-beta-D-manno-heptose-1,7-bisphosphate. Its function is as follows. Catalyzes the ADP transfer from ATP to D-glycero-beta-D-manno-heptose 1-phosphate, yielding ADP-D-glycero-beta-D-manno-heptose. This Sulfurimonas denitrificans (strain ATCC 33889 / DSM 1251) (Thiomicrospira denitrificans (strain ATCC 33889 / DSM 1251)) protein is Bifunctional protein HldE.